Here is a 247-residue protein sequence, read N- to C-terminus: MDNQLSDSSDDESPTDDCSDEGEVEHLKDELSQIPFCELQDLKDKIGSKKYNLAIHGIMEERTQGIPDLETKKKKNKGPQELSSKQRVPKLRKVVQVKKKMGRDPRFDDLSGKFNEDLFRKSYSFVNDIRVEEKKSVEKELKKTKNAEKRKNLNDLLKVMNQQERSRKSAEAKRESKKKIKETERELVQKGKKPFYLRKSELKKLELAEKYKELKSKGKLQKYLTKRRKKTASKDRRHVPERRQVDQ.

Disordered regions lie at residues M1 to D29, R62 to P89, S136 to V188, and G218 to Q247. Positions S8–E23 are enriched in acidic residues. Composition is skewed to basic and acidic residues over residues S136–L153 and E164–R174. A compositionally biased stretch (basic residues) spans G218–P240.

Belongs to the RRP36 family.

Its subcellular location is the nucleus. The protein localises to the nucleolus. Its function is as follows. Involved in the early processing steps of the pre-rRNA in the maturation pathway leading to the 18S rRNA. This chain is Ribosomal RNA processing protein 36 homolog, found in Nematostella vectensis (Starlet sea anemone).